We begin with the raw amino-acid sequence, 150 residues long: Large ribosomal subunit protein bL9 (150 aa).

This sequence belongs to the bacterial ribosomal protein bL9 family.

Binds to the 23S rRNA. The sequence is that of Large ribosomal subunit protein bL9 from Latilactobacillus sakei subsp. sakei (strain 23K) (Lactobacillus sakei subsp. sakei).